Consider the following 100-residue polypeptide: CCAAT/enhancer-binding protein homolog 2 (100 aa).

Disordered stretches follow at residues 1–60 (MSGN…ETLE) and 79–100 (AYAK…SSAV). Residues 17–80 (EDDYSTKRKR…SFLKEMFMAY (64 aa)) enclose the bZIP domain. Positions 23–48 (KRKRNNEAVNRTRQKKRQEENDTAEK) are basic motif. A coiled-coil region spans residues 24 to 83 (RKRNNEAVNRTRQKKRQEENDTAEKVDELKKENETLERKVEQLQKELSFLKEMFMAYAKN). The span at 39 to 60 (RQEENDTAEKVDELKKENETLE) shows a compositional bias: basic and acidic residues. Residues 52-73 (LKKENETLERKVEQLQKELSFL) are leucine-zipper. Residues 88 to 100 (GPPPPPPPSSSAV) are compositionally biased toward pro residues.

Belongs to the bZIP family. C/EBP subfamily. In terms of assembly, interacts with transcription factor zip-11. As to expression, expressed broadly in somatic tissues including the intestine.

Its subcellular location is the nucleus. In terms of biological role, transcription factor that binds to the promoter and the enhancer regions of target genes. Regulates expression of genes involved in fat metabolism, including ech-1.1 and fat-5. Has a protective role in response to infection by the Gram-negative bacterium P.aeruginosa. Required for the activation of infection response gene irg-1 following P.aeruginosa infection. Required to prevent P.aeruginosa ToxA-mediated lethality. May also function in concert with transcription factor zip-11 to mediate immune responses, independently of the pmk-1/p38 MAPK pathway. May act together with the bZIP transcription factor, zip-2. This is CCAAT/enhancer-binding protein homolog 2 from Caenorhabditis elegans.